A 207-amino-acid polypeptide reads, in one-letter code: Inhibitor of hydrogen peroxide resistance (207 aa).

Positions 163-182 (MNYIHQRTRVSRSVVAEVLA) form a DNA-binding region, H-T-H motif.

Belongs to the IprA family.

Involved in oxidative stress resistance. The polypeptide is Inhibitor of hydrogen peroxide resistance (Salmonella typhimurium (strain LT2 / SGSC1412 / ATCC 700720)).